A 529-amino-acid polypeptide reads, in one-letter code: MLGFVGRVAAAPASGALRRLTPSASLPPAQLLLRAAPTAVHPVRDYAAQTSPSPKAGAATGRIVAVIGAVVDVQFDEGLPPILNALEVQGRETRLVLEVAQHLGESTVRTIAMDGTEGLVRGQKVLDSGAPIKIPVGPETLGRIMNVIGEPIDERGPIKTKQFAPIHAEAPEFMEMSVEQEILVTGIKVVDLLAPYAKGGKIGLFGGAGVGKTVLIMELINNVAKAHGGYSVFAGVGERTREGNDLYHEMIESGVINLKDATSKVALVYGQMNEPPGARARVALTGLTVAEYFRDQEGQDVLLFIDNIFRFTQAGSEVSALLGRIPSAVGYQPTLATDMGTMQERITTTKKGSITSVQAIYVPADDLTDPAPATTFAHLDATTVLSRAIAELGIYPAVDPLDSTSRIMDPNIVGSEHYDVARGVQKILQDYKSLQDIIAILGMDELSEEDKLTVSRARKIQRFLSQPFQVAEVFTGHMGKLVPLKETIKGFQQILAGEYDHLPEQAFYMVGPIEEAVAKADKLAEEHSS.

The transit peptide at 1-47 directs the protein to the mitochondrion; the sequence is MLGFVGRVAAAPASGALRRLTPSASLPPAQLLLRAAPTAVHPVRDYA. A glycan (O-linked (GlcNAc) serine) is linked at serine 106. 3 positions are modified to N6-acetyllysine; alternate: lysine 124, lysine 133, and lysine 161. An N6-succinyllysine; alternate mark is found at lysine 124, lysine 133, and lysine 161. At lysine 198 the chain carries N6-acetyllysine. Residues glycine 209, valine 210, glycine 211, lysine 212, threonine 213, and valine 214 each contribute to the ADP site. Glycine 209 serves as a coordination point for ATP. Phosphate contacts are provided by glycine 209, valine 210, glycine 211, lysine 212, and threonine 213. ATP is bound by residues glycine 211, lysine 212, threonine 213, and valine 214. A Mg(2+)-binding site is contributed by threonine 213. Glutamate 238 contributes to the Mg(2+) binding site. Position 239 (arginine 239) interacts with ATP. N6-acetyllysine; alternate is present on residues lysine 259 and lysine 264. N6-succinyllysine; alternate is present on residues lysine 259 and lysine 264. Phosphothreonine is present on threonine 312. Serine 415 is modified (phosphoserine). N6-acetyllysine is present on lysine 426. Residue serine 433 is modified to Phosphoserine. N6-acetyllysine is present on residues lysine 480 and lysine 485. Lysine 522 bears the N6-acetyllysine; alternate mark. Lysine 522 carries the post-translational modification N6-succinyllysine; alternate. Serine 529 is modified (phosphoserine).

Belongs to the ATPase alpha/beta chains family. In terms of assembly, homotrimer. Component of the ATP synthase complex composed at least of ATP5F1A/subunit alpha, ATP5F1B/subunit beta, ATP5MC1/subunit c (homooctomer), MT-ATP6/subunit a, MT-ATP8/subunit 8, ATP5ME/subunit e, ATP5MF/subunit f, ATP5MG/subunit g, ATP5MK/subunit k, ATP5MJ/subunit j, ATP5F1C/subunit gamma, ATP5F1D/subunit delta, ATP5F1E/subunit epsilon, ATP5PF/subunit F6, ATP5PB/subunit b, ATP5PD/subunit d, ATP5PO/subunit OSCP. ATP synthase complex consists of a soluble F(1) head domain (subunits alpha(3) and beta(3)) - the catalytic core - and a membrane F(0) domain - the membrane proton channel (subunits c, a, 8, e, f, g, k and j). These two domains are linked by a central stalk (subunits gamma, delta, and epsilon) rotating inside the F1 region and a stationary peripheral stalk (subunits F6, b, d, and OSCP). Interacts with PPIF. Interacts with BCL2L1 isoform BCL-X(L); the interaction mediates the association of BCL2L1 isoform BCL-X(L) with the mitochondrial membrane F(1)F(0) ATP synthase and enhances neurons metabolic efficiency. Interacts with CLN5 and PPT1. Interacts with S100A1; this interaction increases F1-ATPase activity. Interacts with MTLN. Interacts with TTC5/STRAP; the interaction results in decreased mitochondrial ATP production. It depends on Mg(2+) as a cofactor.

Its subcellular location is the mitochondrion inner membrane. It catalyses the reaction ATP + H2O + 4 H(+)(in) = ADP + phosphate + 5 H(+)(out). In terms of biological role, catalytic subunit beta, of the mitochondrial membrane ATP synthase complex (F(1)F(0) ATP synthase or Complex V) that produces ATP from ADP in the presence of a proton gradient across the membrane which is generated by electron transport complexes of the respiratory chain. ATP synthase complex consist of a soluble F(1) head domain - the catalytic core - and a membrane F(1) domain - the membrane proton channel. These two domains are linked by a central stalk rotating inside the F(1) region and a stationary peripheral stalk. During catalysis, ATP synthesis in the catalytic domain of F(1) is coupled via a rotary mechanism of the central stalk subunits to proton translocation. In vivo, can only synthesize ATP although its ATP hydrolase activity can be activated artificially in vitro. With the subunit alpha (ATP5F1A), forms the catalytic core in the F(1) domain. The chain is ATP synthase F(1) complex subunit beta, mitochondrial from Homo sapiens (Human).